The sequence spans 299 residues: F-actin-capping protein subunit alpha-3 (299 aa).

The residue at position 290 (serine 290) is a Phosphoserine.

The protein belongs to the F-actin-capping protein alpha subunit family. As to quaternary structure, component of the F-actin capping complex, composed of a heterodimer of an alpha and a beta subunit. Component of the WASH complex, composed of F-actin-capping protein subunit alpha (CAPZA1, CAPZA2 or CAPZA3), F-actin-capping protein subunit beta (CAPZB), WASH (WASHC1, WASH2P, WASH3P, WASH4P, WASH5P or WASH6P), WASHC2 (WASHC2A or WASHC2C), WASHC3, WASHC4 and WASHC5. Expressed exclusively in testis and sperm. Highest expression is found in the neck region of ejaculated sperm with lower levels found in the tail and postacrosome region.

The protein resides in the cytoplasm. The protein localises to the cytoskeleton. Functionally, F-actin-capping proteins bind in a Ca(2+)-independent manner to the fast growing ends of actin filaments (barbed end) thereby blocking the exchange of subunits at these ends. Unlike other capping proteins (such as gelsolin and severin), these proteins do not sever actin filaments. May play a role in the morphogenesis of spermatid. The protein is F-actin-capping protein subunit alpha-3 (CAPZA3) of Homo sapiens (Human).